The chain runs to 1097 residues: DNA-directed RNA polymerase subunit beta (1097 aa).

The segment at 1072 to 1097 (QDINPRRNTPSRPTYESLGTSEYEED) is disordered. A compositionally biased stretch (polar residues) spans 1077–1091 (RRNTPSRPTYESLGT).

Belongs to the RNA polymerase beta chain family. In terms of assembly, in cyanobacteria the RNAP catalytic core is composed of 2 alpha, 1 beta, 1 beta', 1 gamma and 1 omega subunit. When a sigma factor is associated with the core the holoenzyme is formed, which can initiate transcription.

The catalysed reaction is RNA(n) + a ribonucleoside 5'-triphosphate = RNA(n+1) + diphosphate. Its function is as follows. DNA-dependent RNA polymerase catalyzes the transcription of DNA into RNA using the four ribonucleoside triphosphates as substrates. This Prochlorococcus marinus (strain MIT 9301) protein is DNA-directed RNA polymerase subunit beta.